The primary structure comprises 505 residues: Flagellin (505 aa).

The protein belongs to the bacterial flagellin family.

It localises to the secreted. It is found in the bacterial flagellum. Functionally, flagellin is the subunit protein which polymerizes to form the filaments of bacterial flagella. This chain is Flagellin (fliC), found in Salmonella budapest.